A 278-amino-acid polypeptide reads, in one-letter code: NAD kinase (278 aa).

Aspartate 67 functions as the Proton acceptor in the catalytic mechanism. NAD(+) is bound by residues 67-68, arginine 72, 137-138, lysine 148, arginine 165, aspartate 167, 178-183, alanine 202, and glutamine 237; these read DG, NE, and TGYAMS.

Belongs to the NAD kinase family. It depends on a divalent metal cation as a cofactor.

The protein localises to the cytoplasm. It carries out the reaction NAD(+) + ATP = ADP + NADP(+) + H(+). Its function is as follows. Involved in the regulation of the intracellular balance of NAD and NADP, and is a key enzyme in the biosynthesis of NADP. Catalyzes specifically the phosphorylation on 2'-hydroxyl of the adenosine moiety of NAD to yield NADP. The sequence is that of NAD kinase from Thermococcus kodakarensis (strain ATCC BAA-918 / JCM 12380 / KOD1) (Pyrococcus kodakaraensis (strain KOD1)).